A 35-amino-acid polypeptide reads, in one-letter code: Sperm-specific protein Phi-1 (35 aa).

2 stretches are compositionally biased toward basic residues: residues 1-17 (PSPTRRSKSRSKSRSRS) and 25-35 (AAKRAKSKTAK). Positions 1-35 (PSPTRRSKSRSKSRSRSRSASAGKAAKRAKSKTAK) are disordered.

As to expression, sperm.

It is found in the nucleus. The protein resides in the chromosome. Its function is as follows. Involved in nuclear basic protein transition: histones are replaced by spermatid specific proteins which are themselves replaced by protamines in late spermatids. The chain is Sperm-specific protein Phi-1 from Mytilus californianus (California mussel).